The sequence spans 444 residues: Chitinase-like protein Idgf1 (444 aa).

Positions 1-20 (MTSLLFVILNIILTLHLCAG) are cleaved as a signal peptide. One can recognise a GH18 domain in the interval 29–444 (KRLICYYDAQ…PILRSVRGHL (416 aa)). A disulfide bridge links cysteine 33 with cysteine 60. Residues asparagine 213, asparagine 225, and asparagine 335 are each glycosylated (N-linked (GlcNAc...) asparagine). A disulfide bond links cysteine 346 and cysteine 429.

It belongs to the glycosyl hydrolase 18 family. IDGF subfamily. In terms of processing, glycosylated.

Its subcellular location is the secreted. In terms of biological role, cooperates with insulin-like peptides to stimulate the proliferation, polarization and motility of imaginal disk cells. May act by stabilizing the binding of insulin-like peptides to its receptor through a simultaneous interaction with both molecules to form a multiprotein signaling complex. This chain is Chitinase-like protein Idgf1 (Idgf1), found in Glossina morsitans morsitans (Savannah tsetse fly).